A 201-amino-acid chain; its full sequence is Large ribosomal subunit protein bL25 (201 aa).

This sequence belongs to the bacterial ribosomal protein bL25 family. CTC subfamily. Part of the 50S ribosomal subunit; part of the 5S rRNA/L5/L18/L25 subcomplex. Contacts the 5S rRNA. Binds to the 5S rRNA independently of L5 and L18.

Its function is as follows. This is one of the proteins that binds to the 5S RNA in the ribosome where it forms part of the central protuberance. In Burkholderia vietnamiensis (strain G4 / LMG 22486) (Burkholderia cepacia (strain R1808)), this protein is Large ribosomal subunit protein bL25.